A 92-amino-acid chain; its full sequence is Acylphosphatase (92 aa).

The region spanning 5–92 (RWHLLVSGKV…QEFTDFRTTH (88 aa)) is the Acylphosphatase-like domain. Active-site residues include arginine 20 and asparagine 38.

It belongs to the acylphosphatase family.

The catalysed reaction is an acyl phosphate + H2O = a carboxylate + phosphate + H(+). This is Acylphosphatase (acyP) from Marinobacter nauticus (strain ATCC 700491 / DSM 11845 / VT8) (Marinobacter aquaeolei).